The primary structure comprises 206 residues: MITFVRGMLAEVGPRSGQSWATVDVGGVGYRVWTHARTVGKLPRIGEEVKLFTLMIVREDAMQLFGFLEPGERELFGQLVSVSGIGPRMGLALLETLAPTELVQAILQGNTRALALAPGVGAKTAQRLALELRSRLSKWREESGLSAMGARASSRVYEEVELALLALGFAPGEVVRALDAVAPAMAGEEQTEAWLRAAIAWLSEQG.

Positions 1–68 are domain I; the sequence is MITFVRGMLA…EDAMQLFGFL (68 aa). The segment at 69-147 is domain II; the sequence is EPGERELFGQ…KWREESGLSA (79 aa). Positions 147–151 are flexible linker; it reads AMGAR. The segment at 152-206 is domain III; it reads ASSRVYEEVELALLALGFAPGEVVRALDAVAPAMAGEEQTEAWLRAAIAWLSEQG.

The protein belongs to the RuvA family. In terms of assembly, homotetramer. Forms an RuvA(8)-RuvB(12)-Holliday junction (HJ) complex. HJ DNA is sandwiched between 2 RuvA tetramers; dsDNA enters through RuvA and exits via RuvB. An RuvB hexamer assembles on each DNA strand where it exits the tetramer. Each RuvB hexamer is contacted by two RuvA subunits (via domain III) on 2 adjacent RuvB subunits; this complex drives branch migration. In the full resolvosome a probable DNA-RuvA(4)-RuvB(12)-RuvC(2) complex forms which resolves the HJ.

It is found in the cytoplasm. Functionally, the RuvA-RuvB-RuvC complex processes Holliday junction (HJ) DNA during genetic recombination and DNA repair, while the RuvA-RuvB complex plays an important role in the rescue of blocked DNA replication forks via replication fork reversal (RFR). RuvA specifically binds to HJ cruciform DNA, conferring on it an open structure. The RuvB hexamer acts as an ATP-dependent pump, pulling dsDNA into and through the RuvAB complex. HJ branch migration allows RuvC to scan DNA until it finds its consensus sequence, where it cleaves and resolves the cruciform DNA. The chain is Holliday junction branch migration complex subunit RuvA from Gloeobacter violaceus (strain ATCC 29082 / PCC 7421).